The chain runs to 61 residues: MARYRHSRSRSRSRYRRRRRRRSRYRSRRRRYRGRRRRRSRRGRRRGYSRRRYSRRRRRRY.

Residues 1-61 (MARYRHSRSR…RYSRRRRRRY (61 aa)) form a disordered region.

The protein belongs to the protamine P1 family. In terms of tissue distribution, testis.

It is found in the nucleus. Its subcellular location is the chromosome. In terms of biological role, protamines substitute for histones in the chromatin of sperm during the haploid phase of spermatogenesis. They compact sperm DNA into a highly condensed, stable and inactive complex. The protein is Sperm protamine P1 (PRM1) of Setonix brachyurus (Quokka).